The chain runs to 298 residues: ATP phosphoribosyltransferase (298 aa).

The protein belongs to the ATP phosphoribosyltransferase family. Long subfamily. The cofactor is Mg(2+).

The protein resides in the cytoplasm. The enzyme catalyses 1-(5-phospho-beta-D-ribosyl)-ATP + diphosphate = 5-phospho-alpha-D-ribose 1-diphosphate + ATP. The protein operates within amino-acid biosynthesis; L-histidine biosynthesis; L-histidine from 5-phospho-alpha-D-ribose 1-diphosphate: step 1/9. Feedback inhibited by histidine. Catalyzes the condensation of ATP and 5-phosphoribose 1-diphosphate to form N'-(5'-phosphoribosyl)-ATP (PR-ATP). Has a crucial role in the pathway because the rate of histidine biosynthesis seems to be controlled primarily by regulation of HisG enzymatic activity. The polypeptide is ATP phosphoribosyltransferase (Aliivibrio fischeri (strain MJ11) (Vibrio fischeri)).